Here is a 246-residue protein sequence, read N- to C-terminus: tRNA (guanine-N(7)-)-methyltransferase (246 aa).

Residues Glu-77, Glu-102, Asp-129, and Asp-152 each coordinate S-adenosyl-L-methionine. Residue Asp-152 is part of the active site. Residues Lys-156, Asp-188, and 225 to 228 (TKFE) contribute to the substrate site.

The protein belongs to the class I-like SAM-binding methyltransferase superfamily. TrmB family.

The catalysed reaction is guanosine(46) in tRNA + S-adenosyl-L-methionine = N(7)-methylguanosine(46) in tRNA + S-adenosyl-L-homocysteine. It participates in tRNA modification; N(7)-methylguanine-tRNA biosynthesis. Its function is as follows. Catalyzes the formation of N(7)-methylguanine at position 46 (m7G46) in tRNA. The protein is tRNA (guanine-N(7)-)-methyltransferase of Haemophilus influenzae (strain ATCC 51907 / DSM 11121 / KW20 / Rd).